Here is a 304-residue protein sequence, read N- to C-terminus: UDP-3-O-acyl-N-acetylglucosamine deacetylase (304 aa).

Residues histidine 78, histidine 235, and aspartate 239 each coordinate Zn(2+). The active-site Proton donor is the histidine 262.

This sequence belongs to the LpxC family. Requires Zn(2+) as cofactor.

The enzyme catalyses a UDP-3-O-[(3R)-3-hydroxyacyl]-N-acetyl-alpha-D-glucosamine + H2O = a UDP-3-O-[(3R)-3-hydroxyacyl]-alpha-D-glucosamine + acetate. Its pathway is glycolipid biosynthesis; lipid IV(A) biosynthesis; lipid IV(A) from (3R)-3-hydroxytetradecanoyl-[acyl-carrier-protein] and UDP-N-acetyl-alpha-D-glucosamine: step 2/6. Functionally, catalyzes the hydrolysis of UDP-3-O-myristoyl-N-acetylglucosamine to form UDP-3-O-myristoylglucosamine and acetate, the committed step in lipid A biosynthesis. In Anaeromyxobacter sp. (strain Fw109-5), this protein is UDP-3-O-acyl-N-acetylglucosamine deacetylase.